The primary structure comprises 413 residues: Variant surface glycoprotein YnAT 1.3 (413 aa).

The signal sequence occupies residues 1-22; that stretch reads MLDNSRARSIVHLLILLKAHVI. N91, N361, and N379 each carry an N-linked (GlcNAc...) asparagine glycan. N379 carries the GPI-anchor amidated asparagine lipid modification. Residues 380 to 413 constitute a propeptide, removed in mature form; that stretch reads SSNPTSRQNSVVQEPTTVSAAAITPLILPWTLLI.

Its subcellular location is the cell membrane. In terms of biological role, VSG forms a coat on the surface of the parasite. The trypanosome evades the immune response of the host by expressing a series of antigenically distinct VSGs from an estimated 1000 VSG genes. This Trypanosoma congolense protein is Variant surface glycoprotein YnAT 1.3.